Here is a 480-residue protein sequence, read N- to C-terminus: Adenylosuccinate lyase (480 aa).

Residues Arg14, Tyr15, Arg79, His80, and Asp81 each coordinate AMP. A fumarate-binding site is contributed by His80. Residue His153 is the Proton donor/acceptor of the active site. Gln236 contacts AMP. Residue Gln236 participates in fumarate binding. Residue Gln236 coordinates N(6)-(1,2-dicarboxyethyl)-AMP. The active-site Proton donor/acceptor is the Ser284. Fumarate contacts are provided by Ser285, Lys290, and Asn292. 3 residues coordinate N(6)-(1,2-dicarboxyethyl)-AMP: Ser285, Lys290, and Asn292. Arg298 serves as a coordination point for AMP. Residues Arg324, Ser329, and Arg333 each coordinate N(6)-(1,2-dicarboxyethyl)-AMP. Residues Ser329 and Arg333 each contribute to the AMP site.

Belongs to the lyase 1 family. Adenylosuccinate lyase subfamily. Homotetramer.

The catalysed reaction is N(6)-(1,2-dicarboxyethyl)-AMP = fumarate + AMP. Its pathway is purine metabolism; AMP biosynthesis via salvage pathway. Catalyzes conversion of succinyladenosine monophosphate (SAMP) to AMP and fumarate on the purine salvage pathway. In Schistosoma mansoni (Blood fluke), this protein is Adenylosuccinate lyase.